A 230-amino-acid polypeptide reads, in one-letter code: Proteasome subunit alpha (230 aa).

This sequence belongs to the peptidase T1A family. As to quaternary structure, the 20S proteasome core is composed of 14 alpha and 14 beta subunits that assemble into four stacked heptameric rings, resulting in a barrel-shaped structure. The two inner rings, each composed of seven catalytic beta subunits, are sandwiched by two outer rings, each composed of seven alpha subunits. The catalytic chamber with the active sites is on the inside of the barrel. Has a gated structure, the ends of the cylinder being occluded by the N-termini of the alpha-subunits. Is capped by the proteasome-associated ATPase, ARC.

Its subcellular location is the cytoplasm. The protein operates within protein degradation; proteasomal Pup-dependent pathway. The formation of the proteasomal ATPase ARC-20S proteasome complex, likely via the docking of the C-termini of ARC into the intersubunit pockets in the alpha-rings, may trigger opening of the gate for substrate entry. Interconversion between the open-gate and close-gate conformations leads to a dynamic regulation of the 20S proteasome proteolysis activity. Functionally, component of the proteasome core, a large protease complex with broad specificity involved in protein degradation. The sequence is that of Proteasome subunit alpha from Thermomonospora curvata (strain ATCC 19995 / DSM 43183 / JCM 3096 / KCTC 9072 / NBRC 15933 / NCIMB 10081 / Henssen B9).